The following is a 164-amino-acid chain: Translation initiation factor IF-3 (164 aa).

Belongs to the IF-3 family. As to quaternary structure, monomer.

It is found in the cytoplasm. Functionally, IF-3 binds to the 30S ribosomal subunit and shifts the equilibrium between 70S ribosomes and their 50S and 30S subunits in favor of the free subunits, thus enhancing the availability of 30S subunits on which protein synthesis initiation begins. The protein is Translation initiation factor IF-3 of Bordetella bronchiseptica (strain ATCC BAA-588 / NCTC 13252 / RB50) (Alcaligenes bronchisepticus).